We begin with the raw amino-acid sequence, 316 residues long: Porphobilinogen deaminase (316 aa).

C245 is modified (S-(dipyrrolylmethanemethyl)cysteine).

This sequence belongs to the HMBS family. In terms of assembly, monomer. Dipyrromethane serves as cofactor.

It carries out the reaction 4 porphobilinogen + H2O = hydroxymethylbilane + 4 NH4(+). It functions in the pathway porphyrin-containing compound metabolism; protoporphyrin-IX biosynthesis; coproporphyrinogen-III from 5-aminolevulinate: step 2/4. Its pathway is porphyrin-containing compound metabolism; chlorophyll biosynthesis. Tetrapolymerization of the monopyrrole PBG into the hydroxymethylbilane pre-uroporphyrinogen in several discrete steps. In Prochlorococcus marinus subsp. pastoris (strain CCMP1986 / NIES-2087 / MED4), this protein is Porphobilinogen deaminase.